The sequence spans 267 residues: MNDSKPLYRPQFFYTTGASPCPYLDGRMERKVVTEITGPDAETLHNRLSRAGFRRSHNIAYAPVCQGCNACVPIRIAVNDFRLTRTRRRINRTNAGVEMFDVPAQATHEQFMLFQRYQKSRHGDGDMAAMGFTDYRAMVEDTPIQTSILEFRDQDDVLLCACLTDRLNDGLSAVYSFYDPDLPQRSLGSYAILSMVAQTKAEGLPYLYLGYWVANSRKMAYKSAYQPAEILSRGAWRPLTQADIEEQEEQTRPLFRPSATGFSTGQE.

The interval 246–267 (EQEEQTRPLFRPSATGFSTGQE) is disordered.

Belongs to the R-transferase family. Bpt subfamily.

It localises to the cytoplasm. It carries out the reaction N-terminal L-glutamyl-[protein] + L-leucyl-tRNA(Leu) = N-terminal L-leucyl-L-glutamyl-[protein] + tRNA(Leu) + H(+). It catalyses the reaction N-terminal L-aspartyl-[protein] + L-leucyl-tRNA(Leu) = N-terminal L-leucyl-L-aspartyl-[protein] + tRNA(Leu) + H(+). Its function is as follows. Functions in the N-end rule pathway of protein degradation where it conjugates Leu from its aminoacyl-tRNA to the N-termini of proteins containing an N-terminal aspartate or glutamate. The chain is Aspartate/glutamate leucyltransferase from Granulibacter bethesdensis (strain ATCC BAA-1260 / CGDNIH1).